Here is a 599-residue protein sequence, read N- to C-terminus: Sulfite reductase [NADPH] flavoprotein alpha-component (599 aa).

The Flavodoxin-like domain occupies 63-201 (ITVISASQTG…LATAWRKQVV (139 aa)). FMN-binding positions include 69 to 74 (SQTGNA), 116 to 119 (STQG), and 152 to 161 (LGDTSYENFC). Residues 234–448 (EQPLTAQLAV…IEHNDNFRLP (215 aa)) enclose the FAD-binding FR-type domain. FAD is bound by residues threonine 322, histidine 356, 386 to 389 (RLYS), 404 to 406 (TVG), tyrosine 410, and 419 to 422 (GGAS). NADP(+)-binding positions include 519–520 (SR), 525–529 (KVYVQ), and aspartate 561. Residue tyrosine 599 coordinates FAD.

This sequence belongs to the NADPH-dependent sulphite reductase flavoprotein subunit CysJ family. The protein in the N-terminal section; belongs to the flavodoxin family. In the C-terminal section; belongs to the flavoprotein pyridine nucleotide cytochrome reductase family. In terms of assembly, alpha(8)-beta(8). The alpha component is a flavoprotein, the beta component is a hemoprotein. FAD serves as cofactor. It depends on FMN as a cofactor.

The catalysed reaction is hydrogen sulfide + 3 NADP(+) + 3 H2O = sulfite + 3 NADPH + 4 H(+). The protein operates within sulfur metabolism; hydrogen sulfide biosynthesis; hydrogen sulfide from sulfite (NADPH route): step 1/1. Functionally, component of the sulfite reductase complex that catalyzes the 6-electron reduction of sulfite to sulfide. This is one of several activities required for the biosynthesis of L-cysteine from sulfate. The flavoprotein component catalyzes the electron flow from NADPH -&gt; FAD -&gt; FMN to the hemoprotein component. The polypeptide is Sulfite reductase [NADPH] flavoprotein alpha-component (Serratia proteamaculans (strain 568)).